Reading from the N-terminus, the 67-residue chain is Small ribosomal subunit protein eS17 (67 aa).

Belongs to the eukaryotic ribosomal protein eS17 family. In terms of assembly, part of the 30S ribosomal subunit.

The protein is Small ribosomal subunit protein eS17 of Pyrococcus furiosus (strain ATCC 43587 / DSM 3638 / JCM 8422 / Vc1).